The following is a 79-amino-acid chain: Sec-independent protein translocase protein TatA (79 aa).

The helical transmembrane segment at 1-21 threads the bilayer; it reads MGGFTSIWHWVIVLLVIVLLF. Residues 48–79 form a disordered region; the sequence is EEEAKNEPKTLDAQVAQTKVHETSEIKSKQES. Residues 66–79 show a composition bias toward basic and acidic residues; the sequence is KVHETSEIKSKQES.

This sequence belongs to the TatA/E family. In terms of assembly, the Tat system comprises two distinct complexes: a TatABC complex, containing multiple copies of TatA, TatB and TatC subunits, and a separate TatA complex, containing only TatA subunits. Substrates initially bind to the TatABC complex, which probably triggers association of the separate TatA complex to form the active translocon.

It is found in the cell inner membrane. Part of the twin-arginine translocation (Tat) system that transports large folded proteins containing a characteristic twin-arginine motif in their signal peptide across membranes. TatA could form the protein-conducting channel of the Tat system. The protein is Sec-independent protein translocase protein TatA of Helicobacter pylori (strain Shi470).